Consider the following 260-residue polypeptide: Snake venom serine protease homolog (260 aa).

Residues 1–18 (MVLIRVLANLLILQLSYA) form the signal peptide. Residues 19-24 (QKASEL) constitute a propeptide that is removed on maturation. A Peptidase S1 domain is found at 25 to 251 (IIGGDECNIN…YTEWIRSIIA (227 aa)). Disulfide bonds link Cys31–Cys165, Cys52–Cys68, Cys100–Cys258, Cys144–Cys212, Cys176–Cys191, and Cys202–Cys227. A glycan (N-linked (GlcNAc...) asparagine) is linked at Asn83.

This sequence belongs to the peptidase S1 family. Snake venom subfamily. As to expression, expressed by the venom gland.

The protein localises to the secreted. Its function is as follows. Snake venom serine protease homolog that may act in the hemostasis system of the prey. The chain is Snake venom serine protease homolog from Bothrops jararacussu (Jararacussu).